The primary structure comprises 356 residues: Leucine carboxyl methyltransferase 1 (356 aa).

S-adenosyl-L-methionine contacts are provided by residues Arg78, Gly101, Asp127, 183–184, and Glu218; that span reads DL.

The protein belongs to the methyltransferase superfamily. LCMT family.

The enzyme catalyses [phosphatase 2A protein]-C-terminal L-leucine + S-adenosyl-L-methionine = [phosphatase 2A protein]-C-terminal L-leucine methyl ester + S-adenosyl-L-homocysteine. Its function is as follows. Methylates the carboxyl group of the C-terminal leucine residue of protein phosphatase 2A catalytic subunits to form alpha-leucine ester residues. The polypeptide is Leucine carboxyl methyltransferase 1 (PPM1) (Cryptococcus neoformans var. neoformans serotype D (strain JEC21 / ATCC MYA-565) (Filobasidiella neoformans)).